Here is a 327-residue protein sequence, read N- to C-terminus: Zinc transport protein ZntB (327 aa).

At 1 to 273 the chain is on the cytoplasmic side; that stretch reads MEAIKGSDVN…ARRTYTMSLM (273 aa). Residues 274-294 form a helical membrane-spanning segment; that stretch reads AMVFLPSTFLTGLFGVNLGGI. The Periplasmic segment spans residues 295–300; it reads PGGGWQ. The helical transmembrane segment at 301-321 threads the bilayer; the sequence is FGFSIFCILLVVLIGGVALWL. The Cytoplasmic portion of the chain corresponds to 322–327; sequence HRSKWL.

This sequence belongs to the CorA metal ion transporter (MIT) (TC 1.A.35) family.

The protein resides in the cell inner membrane. It catalyses the reaction Zn(2+)(out) + H(+)(out) = Zn(2+)(in) + H(+)(in). Zinc transporter. Acts as a Zn(2+):proton symporter, which likely mediates zinc ion uptake. This Escherichia coli O139:H28 (strain E24377A / ETEC) protein is Zinc transport protein ZntB.